The chain runs to 406 residues: Cysteine desulfurase (406 aa).

K226 bears the N6-(pyridoxal phosphate)lysine mark. The active-site Cysteine persulfide intermediate is the C364.

It belongs to the class-V pyridoxal-phosphate-dependent aminotransferase family. Csd subfamily. Homodimer. Interacts with SufE and the SufBCD complex composed of SufB, SufC and SufD. The interaction with SufE is required to mediate the direct transfer of the sulfur atom from the S-sulfanylcysteine. The cofactor is pyridoxal 5'-phosphate.

It localises to the cytoplasm. The enzyme catalyses (sulfur carrier)-H + L-cysteine = (sulfur carrier)-SH + L-alanine. It catalyses the reaction L-selenocysteine + AH2 = hydrogenselenide + L-alanine + A + H(+). It functions in the pathway cofactor biosynthesis; iron-sulfur cluster biosynthesis. Functionally, cysteine desulfurases mobilize the sulfur from L-cysteine to yield L-alanine, an essential step in sulfur metabolism for biosynthesis of a variety of sulfur-containing biomolecules. Component of the suf operon, which is activated and required under specific conditions such as oxidative stress and iron limitation. Acts as a potent selenocysteine lyase in vitro, that mobilizes selenium from L-selenocysteine. Selenocysteine lyase activity is however unsure in vivo. This chain is Cysteine desulfurase, found in Yersinia pestis bv. Antiqua (strain Antiqua).